The sequence spans 91 residues: Acylphosphatase (91 aa).

Residues 6-91 (CMRCYISGRV…WEDYITFDVL (86 aa)) form the Acylphosphatase-like domain. Residues Arg-21 and Asn-39 contribute to the active site.

This sequence belongs to the acylphosphatase family.

The enzyme catalyses an acyl phosphate + H2O = a carboxylate + phosphate + H(+). This Legionella pneumophila (strain Lens) protein is Acylphosphatase (acyP).